The sequence spans 293 residues: Small ribosomal subunit biogenesis GTPase RsgA (293 aa).

Residues 63–223 (KNELVRPPIA…VADTPGFSSL (161 aa)) form the CP-type G domain. GTP is bound by residues 112 to 115 (SKMD) and 166 to 174 (GQSGVGKSS). Zn(2+) contacts are provided by C247, C252, H254, and C260.

The protein belongs to the TRAFAC class YlqF/YawG GTPase family. RsgA subfamily. Monomer. Associates with 30S ribosomal subunit, binds 16S rRNA. Zn(2+) serves as cofactor.

The protein localises to the cytoplasm. One of several proteins that assist in the late maturation steps of the functional core of the 30S ribosomal subunit. Helps release RbfA from mature subunits. May play a role in the assembly of ribosomal proteins into the subunit. Circularly permuted GTPase that catalyzes slow GTP hydrolysis, GTPase activity is stimulated by the 30S ribosomal subunit. The sequence is that of Small ribosomal subunit biogenesis GTPase RsgA from Bacillus cereus (strain ATCC 10987 / NRS 248).